Reading from the N-terminus, the 413-residue chain is Probable N-acetyltransferase HLS1-like (413 aa).

The region spanning 5 to 187 is the N-acetyltransferase domain; sequence VEVREYDPSK…VNPVYAHRVN (183 aa).

Belongs to the acetyltransferase family.

The chain is Probable N-acetyltransferase HLS1-like from Arabidopsis thaliana (Mouse-ear cress).